We begin with the raw amino-acid sequence, 51 residues long: Large ribosomal subunit protein eL39 (51 aa).

Residues 32 to 51 (KGSVKQHPKMRHWRRNTLKK) form a disordered region. The span at 33-51 (GSVKQHPKMRHWRRNTLKK) shows a compositional bias: basic residues.

This sequence belongs to the eukaryotic ribosomal protein eL39 family.

The protein is Large ribosomal subunit protein eL39 of Methanococcus vannielii (strain ATCC 35089 / DSM 1224 / JCM 13029 / OCM 148 / SB).